We begin with the raw amino-acid sequence, 60 residues long: UPF0291 protein Nther_1806 (60 aa).

It belongs to the UPF0291 family.

It localises to the cytoplasm. This chain is UPF0291 protein Nther_1806, found in Natranaerobius thermophilus (strain ATCC BAA-1301 / DSM 18059 / JW/NM-WN-LF).